The chain runs to 137 residues: Fluoride-specific ion channel FluC 1 (137 aa).

Transmembrane regions (helical) follow at residues 4-24 (LIYI…YYLG), 37-57 (LATL…TTYI), 62-82 (ILPA…FTTF), and 100-120 (IAFL…GLGY). Positions 77 and 80 each coordinate Na(+).

The protein belongs to the fluoride channel Fluc/FEX (TC 1.A.43) family.

The protein resides in the cell membrane. It carries out the reaction fluoride(in) = fluoride(out). Na(+) is not transported, but it plays an essential structural role and its presence is essential for fluoride channel function. In terms of biological role, fluoride-specific ion channel. Important for reducing fluoride concentration in the cell, thus reducing its toxicity. This chain is Fluoride-specific ion channel FluC 1, found in Bacillus cereus (strain ATCC 10987 / NRS 248).